Here is a 138-residue protein sequence, read N- to C-terminus: Dual specificity phosphatase ibp1 (138 aa).

The Rhodanese domain occupies 19–133 (SPNEISIIDV…WKRRYGGQQG (115 aa)). The active-site Phosphocysteine intermediate is Cys70.

Belongs to the MPI phosphatase family.

It is found in the cytoplasm. The protein localises to the nucleus. It carries out the reaction O-phospho-L-tyrosyl-[protein] + H2O = L-tyrosyl-[protein] + phosphate. Functionally, may play a role in DNA replication checkpoint via regulation of hsk1 or may act downstream of hsk1 in an S phase regulatory pathway. In Schizosaccharomyces pombe (strain 972 / ATCC 24843) (Fission yeast), this protein is Dual specificity phosphatase ibp1 (ibp1).